The sequence spans 108 residues: Cytochrome c (108 aa).

Heme c contacts are provided by Cys-19, Cys-22, His-23, and Met-85.

It belongs to the cytochrome c family. Post-translationally, binds 1 heme c group covalently per subunit.

It localises to the mitochondrion intermembrane space. In terms of biological role, electron carrier protein. The oxidized form of the cytochrome c heme group can accept an electron from the heme group of the cytochrome c1 subunit of cytochrome reductase. Cytochrome c then transfers this electron to the cytochrome oxidase complex, the final protein carrier in the mitochondrial electron-transport chain. In Cochliobolus lunatus (Filamentous fungus), this protein is Cytochrome c.